A 512-amino-acid chain; its full sequence is NADH-quinone oxidoreductase subunit N 2 (512 aa).

14 helical membrane passes run 23 to 43 (AFVPEIFLSGLFLLVVTIDLF), 50 to 70 (TIIPAVSVIGLIISGYFVYLQ), 88 to 108 (FAIFFKYLFIVSGVFAVLISI), 120 to 140 (SLGEYYSLIVAMVLGMFLMAS), 144 to 164 (LLMMFLSLEMVSIISYILVGY), 179 to 199 (VIYGSVSSGLMIYGFSIIYGL), 220 to 240 (ITLMLGSLLILGGFGYKAGVV), 254 to 274 (PTPITAYLSVGSKAAGFAMLI), 295 to 315 (WVTLLSVVSVVSMVLGNVVAL), 323 to 343 (LLAYSSIAHAGYILLGVIVAD), 351 to 371 (LFYLAAYTIMNIGAFFVIILI), 394 to 414 (AASLTIFLVSLTGLPPTVGFI), 429 to 449 (VFVWLAVIGVLTSVVSLYFYF), and 477 to 497 (LVAFLMILTVVFGLYFTPLSV).

It belongs to the complex I subunit 2 family. As to quaternary structure, NDH-1 is composed of 14 different subunits. Subunits NuoA, H, J, K, L, M, N constitute the membrane sector of the complex.

It is found in the cell inner membrane. It catalyses the reaction a quinone + NADH + 5 H(+)(in) = a quinol + NAD(+) + 4 H(+)(out). Its function is as follows. NDH-1 shuttles electrons from NADH, via FMN and iron-sulfur (Fe-S) centers, to quinones in the respiratory chain. The immediate electron acceptor for the enzyme in this species is believed to be a menaquinone. Couples the redox reaction to proton translocation (for every two electrons transferred, four hydrogen ions are translocated across the cytoplasmic membrane), and thus conserves the redox energy in a proton gradient. In Chloroherpeton thalassium (strain ATCC 35110 / GB-78), this protein is NADH-quinone oxidoreductase subunit N 2.